The following is a 238-amino-acid chain: Adapter protein MecA (238 aa).

The interval 108–133 (EDENEESVQGNQQQRRSHASDHSKRA) is disordered.

Belongs to the MecA family. As to quaternary structure, homodimer.

Enables the recognition and targeting of unfolded and aggregated proteins to the ClpC protease or to other proteins involved in proteolysis. This chain is Adapter protein MecA, found in Staphylococcus carnosus (strain TM300).